The sequence spans 165 residues: MAESFSFDVVSDFDRQELVNTLDQVKREISQRYDLKGTDTSVELDKENIFIITNSELTLNAVNDIIRQKAIKRNLSLKIFDYGETEMVSGNRIKQTILLKQGIKQEIAKKISKNIRDQIKKINVSINGETLRVASKSKNDLQLAIKLVSELEESLNIPLKANNFR.

The protein belongs to the YajQ family.

In terms of biological role, nucleotide-binding protein. This is Nucleotide-binding protein A9601_05361 from Prochlorococcus marinus (strain AS9601).